We begin with the raw amino-acid sequence, 839 residues long: Oligopeptide transporter phomP2 (839 aa).

Positions 1 to 58 (MEADPKVPFTDEMNIQDEHNWESGSWSSSRRSNDSNVTLLSRRSSVEQHEDERQKDSD) are disordered. Residues 23–36 (SGSWSSSRRSNDSN) show a composition bias toward low complexity. N-linked (GlcNAc...) asparagine glycans are attached at residues asparagine 33 and asparagine 36. Residues 44–58 (SSVEQHEDERQKDSD) show a composition bias toward basic and acidic residues. 6 helical membrane-spanning segments follow: residues 105–125 (VWLLSTFWVLAGCSISTVYYF), 177–197 (ALVVIAYWGSSYTAYGLGPLS), 210–230 (PWAITFLVTTQLTGYGLVGLY), 268–288 (VFMAIASAAFVYQWLPSFVFP), 315–335 (GFGLMDFSLDWNYVAFLSPLF), and 345–365 (FVGAALAVWITYPVAYFSDAL). N-linked (GlcNAc...) asparagine glycans are attached at residues asparagine 386 and asparagine 398. 4 helical membrane-spanning segments follow: residues 415-435 (AMHFFWGFASASAMVTYAVLF), 478-498 (AWYALLLAVCLCLGTIQLYAG), 505-525 (WGLQLVVAISALFTLPCGMLF), and 585-605 (WELLVAQVYGTLLGPFVNWAV). Residues 629 to 646 (QGLGLGQGGGGGGGGGGQ) show a composition bias toward gly residues. The tract at residues 629–654 (QGLGLGQGGGGGGGGGGQQQRAAGAH) is disordered. The next 3 helical transmembrane spans lie at 665–685 (NFFSSSVIWGVMGPARVFGGG), 697–717 (WLLPSGFAVGAAAVLLLWLIH), and 728–748 (WPLHPAIIFHGASLFPVFPTT). Asparagine 749 is a glycosylation site (N-linked (GlcNAc...) asparagine). The helical transmembrane segment at 781 to 801 (AGLDCGAQLVQMVLGVAFLVF) threads the bilayer.

It belongs to the oligopeptide OPT transporter family.

It localises to the membrane. Functionally, oligopeptide transporter; part of the gene cluster that mediates the biosynthesis of the phomopsins, a group of hexapeptide mycotoxins which infects lupins and causes lupinosis disease in livestock. This chain is Oligopeptide transporter phomP2, found in Diaporthe leptostromiformis (Lupinosis disease fungus).